The primary structure comprises 241 residues: 1-(5-phosphoribosyl)-5-[(5-phosphoribosylamino)methylideneamino] imidazole-4-carboxamide isomerase (241 aa).

Asp-8 functions as the Proton acceptor in the catalytic mechanism. Asp-131 acts as the Proton donor in catalysis.

It belongs to the HisA/HisF family.

The protein resides in the cytoplasm. It catalyses the reaction 1-(5-phospho-beta-D-ribosyl)-5-[(5-phospho-beta-D-ribosylamino)methylideneamino]imidazole-4-carboxamide = 5-[(5-phospho-1-deoxy-D-ribulos-1-ylimino)methylamino]-1-(5-phospho-beta-D-ribosyl)imidazole-4-carboxamide. It participates in amino-acid biosynthesis; L-histidine biosynthesis; L-histidine from 5-phospho-alpha-D-ribose 1-diphosphate: step 4/9. The chain is 1-(5-phosphoribosyl)-5-[(5-phosphoribosylamino)methylideneamino] imidazole-4-carboxamide isomerase from Sorangium cellulosum (strain So ce56) (Polyangium cellulosum (strain So ce56)).